The following is a 225-amino-acid chain: Protein-L-isoaspartate O-methyltransferase (225 aa).

The active site involves Ser75.

Belongs to the methyltransferase superfamily. L-isoaspartyl/D-aspartyl protein methyltransferase family.

The protein localises to the cytoplasm. It catalyses the reaction [protein]-L-isoaspartate + S-adenosyl-L-methionine = [protein]-L-isoaspartate alpha-methyl ester + S-adenosyl-L-homocysteine. Functionally, catalyzes the methyl esterification of L-isoaspartyl residues in peptides and proteins that result from spontaneous decomposition of normal L-aspartyl and L-asparaginyl residues. It plays a role in the repair and/or degradation of damaged proteins. In Xylella fastidiosa (strain 9a5c), this protein is Protein-L-isoaspartate O-methyltransferase.